Consider the following 80-residue polypeptide: Large ribosomal subunit protein bL31 (80 aa).

C16, C18, C38, and C41 together coordinate Zn(2+).

It belongs to the bacterial ribosomal protein bL31 family. Type A subfamily. In terms of assembly, part of the 50S ribosomal subunit. The cofactor is Zn(2+).

Its function is as follows. Binds the 23S rRNA. This is Large ribosomal subunit protein bL31 from Mycobacterium bovis (strain ATCC BAA-935 / AF2122/97).